Consider the following 343-residue polypeptide: Tumor necrosis factor receptor superfamily member wgn (343 aa).

Disordered regions lie at residues 1–44 and 74–96; these read MMPP…IGGS and SSAA…SIAS. The first 76 residues, 1 to 76, serve as a signal peptide directing secretion; sequence MMPPRLPGGH…ATSASSSSSA (76 aa). A compositionally biased stretch (low complexity) spans 13–24; it reads AMRSRSSSSGHH. Basic residues predominate over residues 29–39; that stretch reads FHKRRRRRQQH. Over 77 to 201 the chain is Extracellular; that stretch reads ANTDIAPPDP…AAWVLDWQTG (125 aa). Residues 99–137 form a TNFR-Cys repeat; the sequence is PCAPQHWWDSQRDRCTPCTRCQGEMIPLRPCQLHTDTIC. Disulfide bonds link cysteine 100/cysteine 113, cysteine 116/cysteine 129, and cysteine 119/cysteine 137. The helical transmembrane segment at 202–222 threads the bilayer; the sequence is VLYVAVLTCLVFFSVAACILI. Over 223-343 the chain is Cytoplasmic; that stretch reads HHMRQWRRME…GVRGCSGLKG (121 aa). A coiled-coil region spans residues 225–257; it reads MRQWRRMERRLDQDVEELSTKLMAKLAEVQSLD.

In terms of assembly, monomer. Interacts (via extracellular cystein-rich domain) with egr (via secreted TNF-homology soluble form); forms heterohexamers when 3 copies associate with egr trimers. Interacts with Traf6. Interacts with Moe. Expressed in the adult midgut; under normal conditions expressed at higher levels than the other TNF receptor grnd.

Its subcellular location is the cell membrane. The protein localises to the cytoplasmic vesicle membrane. Receptor for egr. Involved in induction of apoptosis by triggering JNK signaling. Mediates the tumor suppressor activity of egr which eliminates oncogenic cells from epithelia, thereby maintaining epithelial integrity. Following UV-induced epidermal damage, binds to egr released from apoptotic epidermal cells and plays a role in development of thermal allodynia, a responsiveness to subthreshold thermal stimuli which are not normally perceived as noxious. Together with Moe, involved in control of axon targeting of R8 and R2-R5 photoreceptors, independent of egr. The protein is Tumor necrosis factor receptor superfamily member wgn of Drosophila melanogaster (Fruit fly).